Consider the following 587-residue polypeptide: Trihelix transcription factor GTL1 (587 aa).

Composition is skewed to gly residues over residues 1-10 (MEQGGGGGGN) and 41-54 (GGLGGGGGGGGGGS). The tract at residues 1-63 (MEQGGGGGGN…SASSSSGNRW (63 aa)) is disordered. The region spanning 55–119 (ASSSSGNRWP…KCKEKFENVQ (65 aa)) is the Myb-like 1 domain. A Nuclear localization signal 1 motif is present at residues 96–103 (SRKLLELG). Low complexity predominate over residues 173-194 (SSSPFPVFSQPQPQTQTQPPQT). A disordered region spans residues 173–264 (SSSPFPVFSQ…RKRGNRGGGG (92 aa)). A compositionally biased stretch (pro residues) spans 201-210 (PTPPPLPLPS). A compositionally biased stretch (low complexity) spans 221–232 (SSHSSSTASGMG). The span at 233 to 242 (SDDDDDDMDV) shows a compositional bias: acidic residues. Residues 285-328 (QRSFLEALEKREQERLDREEAWKRQEMARLAREHEVMSQERAAS) are a coiled coil. The interval 348-435 (QLPPSLSSQP…EQSSLPSSSR (88 aa)) is disordered. Residues 356-366 (QPPPPYQPPPA) are compositionally biased toward pro residues. 2 stretches are compositionally biased toward low complexity: residues 379 to 395 (AQSQSQQPIMAIPQQQI) and 411 to 434 (QKQQQQPQQEMVMSSEQSSLPSSS). One can recognise a Myb-like 2 domain in the interval 434-492 (SRWPKAEILALINLRSGMEPRYQDNVPKGLLWEEISTSMKRMGYNRNAKRCKEKWENIN). A Nuclear localization signal 2 motif is present at residues 472 to 479 (MKRMGYNR). The interval 530-587 (GGGSSTSGLPQDQKQSPVTAMKPPQEGLVNVQQTHGSASTEEEEPIEESPQGTEKKTL) is disordered. Composition is skewed to polar residues over residues 538–547 (LPQDQKQSPV) and 559–568 (NVQQTHGSAS).

As to expression, mostly expressed in siliques, and, to a lower extent, in growing root hairs, leaves, stems, and flowers. Present in abaxial epidermal cells, predominantly in guard cells, pavement cells, and meristemoids.

It is found in the nucleus. Its function is as follows. Transcription repressor that binds specific DNA sequence such as GT3 box 5'-GGTAAA-3' in the SDD1 promoter. Negative regulator of water use efficiency (WUE) via the promotion of stomatal density and distribution by the transcription repression of SDD1. Regulates the expression of several cell cycle genes and endoreduplication, especially in trichomes where it prevents ploidy-dependent plant cell growth. Regulates negatively root hair growth by directly binding RSL4 promoter and repressing RSL4 expression. In Arabidopsis thaliana (Mouse-ear cress), this protein is Trihelix transcription factor GTL1.